We begin with the raw amino-acid sequence, 350 residues long: Iron-regulated surface determinant protein A (350 aa).

An N-terminal signal peptide occupies residues Met-1 to Ala-46. The region spanning Ser-62–Ala-184 is the NEAT domain. Heme is bound by residues Lys-75, Ser-82, and Tyr-166. The segment at Lys-188–Pro-314 is disordered. Over residues Lys-203–Pro-214 the composition is skewed to low complexity. Polar residues-rich tracts occupy residues Ala-252–Gln-268 and Lys-278–Lys-296. Over residues Lys-299–Pro-314 the composition is skewed to basic and acidic residues. The LPXTG sorting signal motif lies at Leu-313–Gly-317. Thr-316 carries the pentaglycyl murein peptidoglycan amidated threonine modification. A propeptide spans Gly-317–Lys-350 (removed by sortase A).

It belongs to the IsdA family. In terms of assembly, monomer. Interacts with IsdC. Interacts with IsdB.

It localises to the secreted. Its subcellular location is the cell wall. Its function is as follows. Cell wall-anchored surface receptor that participates in the extraction of heme from oxidized methemoglobin/metHb to enable growth on hemoglobin as a sole iron source. Receives heme from IsdB and transfers it to IsdC. Also plays a role in the inhibition of host immune response. Protects S.aureus against the bactericidal protease activity of apolactoferrin. Decreases bacterial cellular hydrophobicity, which renders S.aureus resistant to bactericidal human skin fatty acids as well as to beta-defensins and cathelicidin. Also binds fibronectin and chains B-beta and gamma of fibrinogen, promoting clumping of S.aureus with fibrinogen. Involved in adherence of S.aureus to human desquamated nasal epithelial cells and is required for nasal colonization. The chain is Iron-regulated surface determinant protein A (isdA) from Staphylococcus aureus (strain COL).